Consider the following 64-residue polypeptide: Large ribosomal subunit protein bL28c (64 aa).

It belongs to the bacterial ribosomal protein bL28 family.

It is found in the plastid. The protein resides in the chloroplast. This chain is Large ribosomal subunit protein bL28c, found in Gracilaria tenuistipitata var. liui (Red alga).